The primary structure comprises 117 residues: Large ribosomal subunit protein uL18 (117 aa).

It belongs to the universal ribosomal protein uL18 family. Part of the 50S ribosomal subunit; part of the 5S rRNA/L5/L18/L25 subcomplex. Contacts the 5S and 23S rRNAs.

In terms of biological role, this is one of the proteins that bind and probably mediate the attachment of the 5S RNA into the large ribosomal subunit, where it forms part of the central protuberance. The protein is Large ribosomal subunit protein uL18 of Halorhodospira halophila (strain DSM 244 / SL1) (Ectothiorhodospira halophila (strain DSM 244 / SL1)).